A 337-amino-acid polypeptide reads, in one-letter code: Mannitol dehydrogenase (337 aa).

The Zn(2+) site is built by C27, H49, C80, C83, C86, C94, and C143.

This sequence belongs to the zinc-containing alcohol dehydrogenase family. Requires Zn(2+) as cofactor.

The catalysed reaction is D-mannitol + NAD(+) = D-mannose + NADH + H(+). In terms of biological role, oxidizes mannitol to mannose. Provides the initial step by which translocated mannitol is committed to central metabolism and, by regulating mannitol pool size, is important in regulating salt tolerance at the cellular level. This Petroselinum crispum (Parsley) protein is Mannitol dehydrogenase (ELI3).